The primary structure comprises 1601 residues: Ras guanine nucleotide exchange factor glfB (1601 aa).

Disordered regions lie at residues 43–140, 188–256, 310–461, and 475–630; these read PLLA…KEWD, DLLI…TTTT, SPQR…APDS, and LTTT…VKKG. A compositionally biased stretch (pro residues) spans 45 to 55; it reads LAPPAPPPPPT. A compositionally biased stretch (polar residues) spans 57–69; that stretch reads QEINIGSGNSTFI. The segment covering 70-126 has biased composition (low complexity); that stretch reads SSNNNNSNNNNNNNSNNNNNNNLNNSNNNNNNLNSNNNNNNNNNNNNNNGNNNNNSN. A Phosphoserine modification is found at Ser197. Residue Thr201 is modified to Phosphothreonine. Low complexity-rich tracts occupy residues 211-256 and 310-330; these read QQQQ…TTTT and SPQR…GVVV. Acidic residues predominate over residues 331 to 359; the sequence is ADEESDSSEEESDSSEEESDEYTDEESET. The segment covering 384 to 398 has biased composition (polar residues); the sequence is PLTSVNSNDNTSSGT. Composition is skewed to low complexity over residues 435 to 458, 475 to 493, and 500 to 520; these read TAVA…TTVA, LTTT…TQSI, and SQQR…AITK. Residues 521-533 are compositionally biased toward basic and acidic residues; sequence PTKDAKDKKDPAK. Low complexity predominate over residues 558 to 577; the sequence is VPTGTSPPVSSSTSISSSTG. Residues 578–596 show a composition bias toward basic and acidic residues; the sequence is IKKDKVKLSKEEKDRIKKE. The Rho-GAP domain maps to 649–836; it reads VRLTQLVLSN…LIIDNYVFLF (188 aa). The region spanning 851-983 is the N-terminal Ras-GEF domain; sequence GKMIISEGSI…TINDFLKLPK (133 aa). The Ras-GEF domain maps to 1021–1255; sequence SAMEIAEQCT…ADLSLKCEPP (235 aa). The tract at residues 1262–1601 is N-terminal F-actin-binding domain; that stretch reads YNAPADIVDE…QESVPSTNAE (340 aa). The tract at residues 1443 to 1474 is disordered; the sequence is SNVEKEKLSSSQEQQEQQEQKQQEQQQQQQEP. A compositionally biased stretch (low complexity) spans 1465-1474; that stretch reads QEQQQQQQEP.

As to quaternary structure, interacts with gpaB and rapA. Interacts directly with F-actin. Post-translationally, simultaneously phosphorylated at Ser-197 and Thr-201 after cAMP stimulation.

It is found in the cytoplasm. It localises to the cell cortex. Its subcellular location is the cytoskeleton. The protein resides in the cell projection. The protein localises to the filopodium. It is found in the lamellipodium. GpaB-activated, rapA-specific guanine nucleotide exchange factor, involved in the regulation of the balance between Ras and Rap signaling at the leading edge of chemotaxing cells. Spatially localized activation of Rap and Ras induces F-actin polymerization at the leading edge of chemotaxing cells through the Rac, PI3K, and TORC2 pathways. Also acts as a key regulator of actin-driven membrane protrusions during processes such as phagocytosis and cytokinesis, possibly by modulating rapA signaling pathways. The polypeptide is Ras guanine nucleotide exchange factor glfB (Dictyostelium discoideum (Social amoeba)).